Consider the following 284-residue polypeptide: 4-diphosphocytidyl-2-C-methyl-D-erythritol kinase (284 aa).

The active site involves Lys-14. Residue 98–108 (PMGGGLGGGSS) coordinates ATP. Residue Asp-140 is part of the active site.

The protein belongs to the GHMP kinase family. IspE subfamily.

The catalysed reaction is 4-CDP-2-C-methyl-D-erythritol + ATP = 4-CDP-2-C-methyl-D-erythritol 2-phosphate + ADP + H(+). The protein operates within isoprenoid biosynthesis; isopentenyl diphosphate biosynthesis via DXP pathway; isopentenyl diphosphate from 1-deoxy-D-xylulose 5-phosphate: step 3/6. Its function is as follows. Catalyzes the phosphorylation of the position 2 hydroxy group of 4-diphosphocytidyl-2C-methyl-D-erythritol. This is 4-diphosphocytidyl-2-C-methyl-D-erythritol kinase from Shewanella halifaxensis (strain HAW-EB4).